A 444-amino-acid chain; its full sequence is Xylose isomerase (444 aa).

Mg(2+) is bound by residues Asp-307 and Asp-309.

The protein belongs to the xylose isomerase family. Homotetramer. The cofactor is Mg(2+).

It is found in the cytoplasm. It carries out the reaction alpha-D-xylose = alpha-D-xylulofuranose. The chain is Xylose isomerase from Thermotoga neapolitana (strain ATCC 49049 / DSM 4359 / NBRC 107923 / NS-E).